A 79-amino-acid chain; its full sequence is MKLTCVLIITVLFLTASQLITADYSGDKRQYRAVRLRDEMRNFKGARDCGEQGQGCYTRPCCPGLHCAAGATGGGSCQP.

The signal sequence occupies residues 1–22; sequence MKLTCVLIITVLFLTASQLITA. Positions 23–47 are excised as a propeptide; it reads DYSGDKRQYRAVRLRDEMRNFKGAR. 3 cysteine pairs are disulfide-bonded: Cys49/Cys62, Cys56/Cys67, and Cys61/Cys77. 4-hydroxyproline occurs at positions 60 and 63.

This sequence belongs to the conotoxin O1 superfamily. As to expression, expressed by the venom duct.

It localises to the secreted. Its function is as follows. Ion channel inhibitor that inhibits the increase in intracellular calcium upon depolarization in DRG neurons. In vivo, both intraperitoneal and intracranial injections into mice induce hyperactivity. The protein is Conotoxin Vi6.4 of Conus virgo (Virgin cone).